We begin with the raw amino-acid sequence, 257 residues long: Diphthine synthase (257 aa).

S-adenosyl-L-methionine is bound by residues L9, D85, V88, 113 to 114 (SI), L164, A207, and H232.

It belongs to the diphthine synthase family. In terms of assembly, homodimer.

It carries out the reaction 2-[(3S)-amino-3-carboxypropyl]-L-histidyl-[translation elongation factor 2] + 3 S-adenosyl-L-methionine = diphthine-[translation elongation factor 2] + 3 S-adenosyl-L-homocysteine + 3 H(+). The protein operates within protein modification; peptidyl-diphthamide biosynthesis. In terms of biological role, S-adenosyl-L-methionine-dependent methyltransferase that catalyzes the trimethylation of the amino group of the modified target histidine residue in translation elongation factor 2 (EF-2), to form an intermediate called diphthine. The three successive methylation reactions represent the second step of diphthamide biosynthesis. This is Diphthine synthase from Methanococcus aeolicus (strain ATCC BAA-1280 / DSM 17508 / OCM 812 / Nankai-3).